Reading from the N-terminus, the 343-residue chain is Mesaconyl-CoA hydratase (343 aa).

A MaoC-like domain is found at 47-116 (SDEFARACGL…STVIGLKENS (70 aa)). Residues 60–63 (PVDE), 83–86 (VANL), and 94–96 (LKP) contribute to the substrate site.

It carries out the reaction (2R,3S)-beta-methylmalyl-CoA = 2-methylfumaryl-CoA + H2O. Involved in the ethylmalonyl-CoA pathway for acetate assimilation. Catalyzes the reversible hydration of mesaconyl-CoA (2-methylfumaryl-CoA) to yield beta-methylmalyl-CoA ((2R,3S)-beta-methylmalyl-CoA). The protein is Mesaconyl-CoA hydratase (mch) of Cereibacter sphaeroides (strain ATCC 17023 / DSM 158 / JCM 6121 / CCUG 31486 / LMG 2827 / NBRC 12203 / NCIMB 8253 / ATH 2.4.1.) (Rhodobacter sphaeroides).